Consider the following 254-residue polypeptide: Phosphoribosylaminoimidazole-succinocarboxamide synthase (254 aa).

Belongs to the SAICAR synthetase family.

The enzyme catalyses 5-amino-1-(5-phospho-D-ribosyl)imidazole-4-carboxylate + L-aspartate + ATP = (2S)-2-[5-amino-1-(5-phospho-beta-D-ribosyl)imidazole-4-carboxamido]succinate + ADP + phosphate + 2 H(+). The protein operates within purine metabolism; IMP biosynthesis via de novo pathway; 5-amino-1-(5-phospho-D-ribosyl)imidazole-4-carboxamide from 5-amino-1-(5-phospho-D-ribosyl)imidazole-4-carboxylate: step 1/2. The sequence is that of Phosphoribosylaminoimidazole-succinocarboxamide synthase from Brucella anthropi (strain ATCC 49188 / DSM 6882 / CCUG 24695 / JCM 21032 / LMG 3331 / NBRC 15819 / NCTC 12168 / Alc 37) (Ochrobactrum anthropi).